Reading from the N-terminus, the 125-residue chain is Small ribosomal subunit protein eS8 (125 aa).

The protein belongs to the eukaryotic ribosomal protein eS8 family. Part of the 30S ribosomal subunit.

The chain is Small ribosomal subunit protein eS8 from Methanosarcina acetivorans (strain ATCC 35395 / DSM 2834 / JCM 12185 / C2A).